The primary structure comprises 221 residues: PKHD-type hydroxylase PMN2A_0775 (221 aa).

In terms of domain architecture, Fe2OG dioxygenase spans 80–174 (LIHGVMFTQS…RHVCVGWIQS (95 aa)). The Fe cation site is built by histidine 98, aspartate 100, and histidine 155. Residue arginine 165 participates in 2-oxoglutarate binding.

Fe(2+) is required as a cofactor. It depends on L-ascorbate as a cofactor.

In Prochlorococcus marinus (strain NATL2A), this protein is PKHD-type hydroxylase PMN2A_0775.